The following is a 388-amino-acid chain: uncharacterized protein (388 aa).

The stretch at 68 to 96 (KVDRMSEEEERMAIATRKAKEVAKELSET) forms a coiled coil. The tract at residues 162–388 (GSHPLVREFN…PPQQDWFDSV (227 aa)) is disordered. 2 stretches are compositionally biased toward basic and acidic residues: residues 166–176 (LVREFNGEKPP) and 196–208 (ATDK…QSDK). Basic residues predominate over residues 233 to 251 (GVKHQHAIRRDDRHRHGMR). Low complexity-rich tracts occupy residues 265–279 (QQQQ…SRGQ) and 293–346 (QRRP…QRPA).

This is an uncharacterized protein from Frog virus 3 (isolate Goorha) (FV-3).